Here is a 187-residue protein sequence, read N- to C-terminus: Large ribosomal subunit protein bL9 (187 aa).

The tract at residues 155–187 is disordered; sequence AQRGGMVTGLREEDEEEEVEETATEEGGEETAA. The segment covering 166–187 has biased composition (acidic residues); that stretch reads EEDEEEEVEETATEEGGEETAA.

Belongs to the bacterial ribosomal protein bL9 family.

In terms of biological role, binds to the 23S rRNA. The polypeptide is Large ribosomal subunit protein bL9 (Rhodospirillum centenum (strain ATCC 51521 / SW)).